The chain runs to 111 residues: WAP four-disulfide core domain protein 12 (111 aa).

The first 23 residues, 1–23 (MGSSSFLVLMVSLTLVTLVAVEG), serve as a signal peptide directing secretion. The WAP domain maps to 27-74 (DIEKAGVCPADNVRCFKSDPPQCHTDQDCLGERKCCYLHCGFKCVIPV). Cystine bridges form between Cys-34–Cys-62, Cys-41–Cys-66, Cys-49–Cys-61, and Cys-55–Cys-70. Residues 80–111 (GGNKDEDVSRPYPEPGWEAKCPGSSSTRCPQK) are disordered. Positions 102 to 111 (GSSSTRCPQK) are enriched in polar residues.

Its subcellular location is the secreted. In terms of biological role, antibacterial protein. Putative acid-stable proteinase inhibitor. This chain is WAP four-disulfide core domain protein 12 (WFDC12), found in Pan troglodytes (Chimpanzee).